Consider the following 291-residue polypeptide: ATP synthase gamma chain (291 aa).

Belongs to the ATPase gamma chain family. F-type ATPases have 2 components, CF(1) - the catalytic core - and CF(0) - the membrane proton channel. CF(1) has five subunits: alpha(3), beta(3), gamma(1), delta(1), epsilon(1). CF(0) has three main subunits: a, b and c.

It is found in the cell inner membrane. Functionally, produces ATP from ADP in the presence of a proton gradient across the membrane. The gamma chain is believed to be important in regulating ATPase activity and the flow of protons through the CF(0) complex. This is ATP synthase gamma chain from Neisseria meningitidis serogroup A / serotype 4A (strain DSM 15465 / Z2491).